We begin with the raw amino-acid sequence, 103 residues long: Small ribosomal subunit protein uS10 (103 aa).

The protein belongs to the universal ribosomal protein uS10 family. In terms of assembly, part of the 30S ribosomal subunit.

Involved in the binding of tRNA to the ribosomes. This Neisseria meningitidis serogroup C / serotype 2a (strain ATCC 700532 / DSM 15464 / FAM18) protein is Small ribosomal subunit protein uS10.